We begin with the raw amino-acid sequence, 218 residues long: Thyroid hormone receptor alpha (218 aa).

Positions 1–215 (PEDIGQSPGV…PPLFLEVFED (215 aa)) constitute an NR LBD domain. 3,3',5-triiodo-L-thyronine is bound by residues Arg-36 and Ser-85.

It belongs to the nuclear hormone receptor family. NR1 subfamily.

Its subcellular location is the nucleus. Nuclear hormone receptor that can act as a repressor or activator of transcription. High affinity receptor for thyroid hormones, including triiodothyronine and thyroxine. This Oncorhynchus mykiss (Rainbow trout) protein is Thyroid hormone receptor alpha (thra).